We begin with the raw amino-acid sequence, 275 residues long: MFTSLRFLCFGNTPLPSLNSSRSPQRTPSLGSSSTSSLSPIEEELATPSTPESNDSGLTLSSSIGPYPIPSSLMREVESIRSHILQQKSRHQNQPSRRHKQKNRRQRLQEVAIKQSIASSIREKAKPIATPTCYYDVSSPYAEDTSVFELNPAGEKNTNEEEEFGIASQHDWDEMINPHYNYLGAQEQIWDGDLDSSAYWGLDDLISQGYFETYDNSSVVCHPKQDANTDESYSISKALTISRNVKQPNGDTGWWLVKHVDPRALSKLGSDCVIL.

2 disordered regions span residues 13-65 (TPLP…SSIG) and 84-108 (ILQQ…RQRL). The segment covering 14–26 (PLPSLNSSRSPQR) has biased composition (polar residues). Residues 27-40 (TPSLGSSSTSSLSP) are compositionally biased toward low complexity. Residues 47–60 (TPSTPESNDSGLTL) are compositionally biased toward polar residues. A compositionally biased stretch (basic residues) spans 88–106 (KSRHQNQPSRRHKQKNRRQ).

Regulatory protein; part of the gene cluster that mediates the biosynthesis of sesquiterpenyl epoxy-cyclohexenoids (SECs) such as anthrobotrisins and arthrosporols, metabolites that possess a novel hybrid carbon skeleton consisting of a polyketide-derived epoxycyclohexenol combined with a terpenoid-derived monocyclic sesquiterpenol substructure (PKS-PTS hybrid). The SEC pathway plays an important role for fungal soil colonization via decreasing fungal nematode-capturing ability. AOL_s00215g275 can perform multiple functions in fungal growth and development via regulating the SEC biosynthesis, TCA cycle, and septa formation. Also involved in inhibiting conidial formation, germination, and nematicidal activity but promotes trap production. Plays a role in fungal resistances and significantly regulates the fungal morphology and responses to chemical stressors such as cell-wall-perturbing agents (SDS and Congo red), osmotic agents (NaCl and sorbitol), or the oxidant H(2)O(2). This is Transcription regulator AOL_s00215g275 from Arthrobotrys oligospora (strain ATCC 24927 / CBS 115.81 / DSM 1491) (Nematode-trapping fungus).